The primary structure comprises 226 residues: Endonuclease V (226 aa).

Positions 43 and 108 each coordinate Mg(2+).

Belongs to the endonuclease V family. Mg(2+) serves as cofactor.

It is found in the cytoplasm. It catalyses the reaction Endonucleolytic cleavage at apurinic or apyrimidinic sites to products with a 5'-phosphate.. Its function is as follows. DNA repair enzyme involved in the repair of deaminated bases. Selectively cleaves double-stranded DNA at the second phosphodiester bond 3' to a deoxyinosine leaving behind the intact lesion on the nicked DNA. This chain is Endonuclease V, found in Thermosipho melanesiensis (strain DSM 12029 / CIP 104789 / BI429).